Reading from the N-terminus, the 82-residue chain is Host transcription reprogramming factor 10 (82 aa).

Residues 1–19 (MQIFNMVSLVALFALGATA) form the signal peptide. The C2H2-type zinc finger occupies 57–81 (WVCHACNKQFTTPAALQKHKDTVVH).

It is found in the secreted. The protein resides in the host nucleus. Probable secreted effector that translocates into the nuclei of host cells to reprogram the expression of targeted genes by binding on effector binding elements in rice. In Pyricularia oryzae (strain 70-15 / ATCC MYA-4617 / FGSC 8958) (Rice blast fungus), this protein is Host transcription reprogramming factor 10.